We begin with the raw amino-acid sequence, 599 residues long: MAYVPLSGTNVRILADVPFSNDYKNTRWFTSSSNQYNWFNRKSRVYEMSKVTFMGFRENKPYVSVSLPIDKLYSASYIMFQNADYGNKWFYAFVTELEFKNSAVTYVHFEIDVLQTWMFDMKFQESFIVREHVKLWNDDGTPTINTIDEGLSYGSEYDIVSVENHKPYDDMMFLVIISKSIMHGTPGEEESRLNDINASLNGMPQPLCYYIHPFYKDGKVPKTYIGDNNANLSPIVNMLTNIFSQKSAVNDIVNMYVTDYIGLKLDYKNGDKELKLDKDMFEQAGIADDKHGNVDTIFVKKIPDYEALEIDTGDKWGGFTKDQESKLMMYPYCVTEITDFKGNHMNLKTEYINNSKLKIQVRGSLGVSNKVAYSVQDYNADSALSGGNRLTASLDSSLINNNPNDIAILNDYLSAYLQGNKNSLENQKSSILFNGIMGMIGGGISAGASAAGGSALGMASSVTGMTSTAGNAVLQMQAMQAKQADIANIPPQLTKMGGNTAFDYGNGYRGVYVIKKQLKAEYRRSLSSFFHKYGYKINRVKKPNLRTRKAFNYVQTKDCFISGDINNNDLQEIRTIFDNGITLWHTDNIGNYSVENELR.

In terms of assembly, homohexamer; forms a hexameric tube structure with six flexible hydrophobic loops.

It is found in the virion. Functionally, distal (knob) tail protein that plugs the end of the tube before DNA ejection and forms a channel perforating the host membrane during ejection. In Bacillus subtilis (Bacteriophage phi-29), this protein is Tail knob protein gp9.